Here is a 310-residue protein sequence, read N- to C-terminus: Aspartate carbamoyltransferase catalytic subunit 1 (310 aa).

Carbamoyl phosphate-binding residues include R55 and T56. K85 provides a ligand contact to L-aspartate. Carbamoyl phosphate is bound by residues R106, H134, and Q137. The L-aspartate site is built by R167 and R228. Carbamoyl phosphate contacts are provided by L266 and P267.

The protein belongs to the aspartate/ornithine carbamoyltransferase superfamily. ATCase family. Heterododecamer (2C3:3R2) of six catalytic PyrB chains organized as two trimers (C3), and six regulatory PyrI chains organized as three dimers (R2).

It carries out the reaction carbamoyl phosphate + L-aspartate = N-carbamoyl-L-aspartate + phosphate + H(+). It functions in the pathway pyrimidine metabolism; UMP biosynthesis via de novo pathway; (S)-dihydroorotate from bicarbonate: step 2/3. Functionally, catalyzes the condensation of carbamoyl phosphate and aspartate to form carbamoyl aspartate and inorganic phosphate, the committed step in the de novo pyrimidine nucleotide biosynthesis pathway. The chain is Aspartate carbamoyltransferase catalytic subunit 1 from Shewanella halifaxensis (strain HAW-EB4).